A 370-amino-acid chain; its full sequence is Flagellar P-ring protein 1 (370 aa).

Residues 1–25 (MSVLIKTRHCFVLLGLWLVLPTASA) form the signal peptide.

It belongs to the FlgI family. As to quaternary structure, the basal body constitutes a major portion of the flagellar organelle and consists of four rings (L,P,S, and M) mounted on a central rod.

It is found in the periplasm. It localises to the bacterial flagellum basal body. Assembles around the rod to form the L-ring and probably protects the motor/basal body from shearing forces during rotation. This chain is Flagellar P-ring protein 1, found in Yersinia pestis.